A 116-amino-acid chain; its full sequence is Secreted RxLR effector protein 9 (116 aa).

The N-terminal stretch at 1–17 is a signal peptide; sequence MRLIYIFMVSIVTTLHA. The RxLR-dEER signature appears at 49–64; sequence RILRGTDGNVNREQER.

The protein belongs to the RxLR effector family.

It is found in the secreted. The protein localises to the host cytoplasm. It localises to the host nucleus. Functionally, effector that acts as a broad suppressor of cell death to interrupt plant immunity. Inhibits cell death induced by cell death-inducing proteins, including the PAMP elicitor INF1 from P.infestans. The chain is Secreted RxLR effector protein 9 from Plasmopara viticola (Downy mildew of grapevine).